A 153-amino-acid polypeptide reads, in one-letter code: MISQSTLFLFILLIIGLIAKNQSLTVAIGVLFLLKFTFLGDKVFPYLQTKGINLGVTVITIAVLVPIATGEIGFKQLGEAAKSYYAWIALASGVAVALLAKGGVQLLTTDPHITTALVFGTIIAVALFNGVAVGPLIGSGIAYAVMSIIQMFK.

4 helical membrane-spanning segments follow: residues F8 to I28, L54 to F74, W87 to L107, and L117 to I137.

It belongs to the UPF0756 family.

It localises to the cell membrane. This is UPF0756 membrane protein BCQ_4399 from Bacillus cereus (strain Q1).